Consider the following 1053-residue polypeptide: MPKNTSLKKVLLIGSGPIQIGQAAEFDYAGSQACKAVREEGIEVVLVNSNPATIQTDPETADKVYVEPLKADIIAEIIKKEKPDGILSGMGGQTGLNLTAELYELGALEGVQILGTPLEAIYHGEDRDLFKKLMLEIGEPIPKSFILTKIEQLDEAYEEVGLPAIIRPAYTLGGAGGGVANTKEELRTIVEHGLTKSRVHQVLIEESVKGWNEIEFEVMRDAADTCIIICGMENVDPMGVHTGESVVVAPILSLTSDEFGIMRRAAIKIIRALNVQGGCNIQFAFNNGDYRVIEVNPRVSRSSALASKATGYPIARVAAKVAIGLHLDEIMNTVTGCTPACFEPAVDYVVVKVSRWPFDKFKTADRTLTTSMKSTGEVMAIGRTVEEGFKKALRSLDTDIYRHTDLNEIRMILSRPTDERFPTLFDAFRLGMTVKEVYDLTQIEPFFLEKIQNVVDIELELRDHPTEELVKTSKKFGFSNAEIRELTGWNIYKIESLVGLPTYKMVDTCSAEFPAKTPYYYSTWEQECELTQSDRKKILILGSGAIRIGQGIEFDYCTVHAVKSLREEGIEVHILNNNPETVSTDFDTSDRLYFEPMQLEDVVNILRKGDYDGVMVQFGGQNSVNLAIPIQEEIKLFGLKTKVLGTSPDNMDVAEDRNRFSVLLDQNNIPSPANGSAYSEKEAYAIANKIGYPVLVRPSYVLGGRAMELVHDELELQTYIKEAVRVSNTHPVLIDRYLDNATELDVDAVSDGETVLIGGVMEHIEEAGVHSGDSACVIPTQTLTPEQIATVKDYTRKIALSLGVVGLINIQYAIHKGTVYVLEANPRASRTVPFVSKATGLPLAKIAAKLMLGKKLADLGYQEKEISHVAVKEVLLPFSRLPGVDPILGPEMKSTGEVIGIDYDFGRAFYKASQAADNTIPLKGNVFISVTNDQKTEILPIARKLYDLGFSLYGTEGTVKFLAQNDIPMNLVRKVQEGSPNILDMIRALDVHLLINTPGDKNARADHLQIMRASIDYSIPYITTIFGAEAAVQAIESMKTNTITVEPLSHYHS.

Positions 1 to 397 (MPKNTSLKKV…GFKKALRSLD (397 aa)) are carboxyphosphate synthetic domain. Residues Arg-127, Arg-167, Gly-173, Gly-174, Glu-206, Val-208, Glu-213, Gly-239, Val-240, His-241, Gln-282, and Glu-294 each coordinate ATP. The ATP-grasp 1 domain occupies 131-323 (KKLMLEIGEP…IARVAAKVAI (193 aa)). Mg(2+) is bound by residues Gln-282, Glu-294, and Asn-296. Mn(2+)-binding residues include Gln-282, Glu-294, and Asn-296. The interval 398 to 530 (TDIYRHTDLN…YSTWEQECEL (133 aa)) is oligomerization domain. Residues 531-919 (TQSDRKKILI…YKASQAADNT (389 aa)) are carbamoyl phosphate synthetic domain. One can recognise an ATP-grasp 2 domain in the interval 661–852 (SVLLDQNNIP…LAKIAAKLML (192 aa)). Positions 697, 736, 738, 743, 768, 769, 770, 771, 811, and 823 each coordinate ATP. Residues Gln-811, Glu-823, and Asn-825 each coordinate Mg(2+). Mn(2+) is bound by residues Gln-811, Glu-823, and Asn-825. Positions 918–1053 (NTIPLKGNVF…TVEPLSHYHS (136 aa)) constitute an MGS-like domain. Residues 920 to 1053 (IPLKGNVFIS…TVEPLSHYHS (134 aa)) are allosteric domain.

Belongs to the CarB family. As to quaternary structure, composed of two chains; the small (or glutamine) chain promotes the hydrolysis of glutamine to ammonia, which is used by the large (or ammonia) chain to synthesize carbamoyl phosphate. Tetramer of heterodimers (alpha,beta)4. The cofactor is Mg(2+). Mn(2+) serves as cofactor.

It carries out the reaction hydrogencarbonate + L-glutamine + 2 ATP + H2O = carbamoyl phosphate + L-glutamate + 2 ADP + phosphate + 2 H(+). The enzyme catalyses hydrogencarbonate + NH4(+) + 2 ATP = carbamoyl phosphate + 2 ADP + phosphate + 2 H(+). Its pathway is amino-acid biosynthesis; L-arginine biosynthesis; carbamoyl phosphate from bicarbonate: step 1/1. It participates in pyrimidine metabolism; UMP biosynthesis via de novo pathway; (S)-dihydroorotate from bicarbonate: step 1/3. In terms of biological role, large subunit of the glutamine-dependent carbamoyl phosphate synthetase (CPSase). CPSase catalyzes the formation of carbamoyl phosphate from the ammonia moiety of glutamine, carbonate, and phosphate donated by ATP, constituting the first step of 2 biosynthetic pathways, one leading to arginine and/or urea and the other to pyrimidine nucleotides. The large subunit (synthetase) binds the substrates ammonia (free or transferred from glutamine from the small subunit), hydrogencarbonate and ATP and carries out an ATP-coupled ligase reaction, activating hydrogencarbonate by forming carboxy phosphate which reacts with ammonia to form carbamoyl phosphate. The protein is Carbamoyl phosphate synthase large chain of Methanocorpusculum labreanum (strain ATCC 43576 / DSM 4855 / Z).